Reading from the N-terminus, the 116-residue chain is Large ribosomal subunit protein uL18 (116 aa).

It belongs to the universal ribosomal protein uL18 family. In terms of assembly, part of the 50S ribosomal subunit; part of the 5S rRNA/L5/L18/L25 subcomplex. Contacts the 5S and 23S rRNAs.

Functionally, this is one of the proteins that bind and probably mediate the attachment of the 5S RNA into the large ribosomal subunit, where it forms part of the central protuberance. This is Large ribosomal subunit protein uL18 from Psychromonas ingrahamii (strain DSM 17664 / CCUG 51855 / 37).